A 151-amino-acid polypeptide reads, in one-letter code: Neuroglobin (151 aa).

In terms of domain architecture, Globin spans Met1–Asp149. Residues His64 and His96 each coordinate heme b.

This sequence belongs to the globin family. As to quaternary structure, monomer. Homodimer and homotetramer; disulfide-linked. Mainly monomeric but also detected as part of homodimers and homotetramers. Interacts with 14-3-3 proteins; regulates the phosphorylation of NGB. Could interact (ferrous form) with G-alpha(i) proteins (GTP-bound form). Post-translationally, phosphorylated during hypoxia by ERK1/ERK2. Phosphorylation regulates the heme pocket hexacoordination preventing the association of His-64 with the heme metal center. Thereby, promotes the access of dioxygen and nitrite to the heme and stimulates the nitrite reductase activity. Phosphorylation during hypoxia is stabilized by 14-3-3 proteins.

It localises to the cytoplasm. It is found in the cytosol. The protein localises to the mitochondrion matrix. It catalyses the reaction Fe(III)-heme b-[protein] + nitric oxide + H2O = Fe(II)-heme b-[protein] + nitrite + 2 H(+). In terms of biological role, monomeric globin with a bis-histidyl six-coordinate heme-iron atom through which it can bind dioxygen, carbon monoxide and nitric oxide. Could help transport oxygen and increase its availability to the metabolically active neuronal tissues, though its low quantity in tissues as well as its high affinity for dioxygen, which may limit its oxygen-releasing ability, argue against it. The ferrous/deoxygenated form exhibits a nitrite reductase activity and it could produce nitric oxide which in turn inhibits cellular respiration in response to hypoxia. In its ferrous/deoxygenated state, it may also exhibit GDI (Guanine nucleotide Dissociation Inhibitor) activity toward heterotrimeric G-alpha proteins, thereby regulating signal transduction to facilitate neuroprotective responses in the wake of hypoxia and associated oxidative stress. This chain is Neuroglobin, found in Macaca mulatta (Rhesus macaque).